The following is a 1089-amino-acid chain: GPI ethanolamine phosphate transferase 3, catalytic subunit (1089 aa).

The chain crosses the membrane as a helical span at residues 4–24 (ASVLLFLAWVCFLFYAGIALF). N-linked (GlcNAc...) asparagine glycosylation occurs at Asn268. 13 helical membrane passes run 457 to 477 (LLAA…SPGF), 482 to 502 (LLLT…GLLG), 510 to 530 (LVLL…WKAW), 541 to 561 (TLFP…AVFF), 575 to 595 (FLLG…GQLL), 668 to 688 (LWYG…RLWL), 701 to 721 (MLFV…YWAL), 747 to 767 (VAGL…TVLV), 830 to 850 (SVYS…LLLL), 857 to 877 (LVFL…AAGI), 944 to 964 (FASH…PFLC), 1014 to 1034 (LKYL…ASIL), and 1048 to 1068 (FIFE…GIAL).

It belongs to the PIGG/PIGN/PIGO family. PIGO subfamily. As to quaternary structure, part of the ethanolamine phosphate transferase 3 complex composed by PIGO and PIGF. PIGF is required to stabilize PIGO.

It localises to the endoplasmic reticulum membrane. Its pathway is glycolipid biosynthesis; glycosylphosphatidylinositol-anchor biosynthesis. Its function is as follows. Catalytic subunit of the ethanolamine phosphate transferase 3 complex that transfers an ethanolamine phosphate (EtNP) from a phosphatidylethanolamine (PE) to the 6-OH position of the third alpha-1,2-linked mannose of an alpha-D-Man-(1-&gt;2)-alpha-D-Man-(1-&gt;6)-2-PEtn-alpha-D-Man-(1-&gt;4)-alpha-D-GlcN-(1-&gt;6)-(1-radyl,2-acyl-sn-glycero-3-phospho)-2-acyl-inositol (also termed H6) intermediate to generate a 6-PEtn-alpha-D-Man-(1-&gt;2)-alpha-D-Man-(1-&gt;6)-2-PEtn-alpha-D-Man-(1-&gt;4)-alpha-D-GlcN-(1-&gt;6)-(1-radyl,2-acyl-sn-glycero-3-phospho)-2-acyl-inositol (also termed H7) and participates in the tenth step of the glycosylphosphatidylinositol-anchor biosynthesis. This chain is GPI ethanolamine phosphate transferase 3, catalytic subunit, found in Homo sapiens (Human).